A 197-amino-acid polypeptide reads, in one-letter code: Recombination protein RecR (197 aa).

The C4-type zinc finger occupies C56–C71. The 96-residue stretch at T79–P174 folds into the Toprim domain.

Belongs to the RecR family.

Its function is as follows. May play a role in DNA repair. It seems to be involved in an RecBC-independent recombinational process of DNA repair. It may act with RecF and RecO. The protein is Recombination protein RecR of Psychrobacter cryohalolentis (strain ATCC BAA-1226 / DSM 17306 / VKM B-2378 / K5).